A 308-amino-acid polypeptide reads, in one-letter code: ALMKTKLFINNTMASSGIGLETDAIKAAQAVYCQGQICMSEEQEALCPFDRLEGEVAIVVGAGPSERRRLLLKVADVMESKTPKFIEVMAMEVGASALWAGFNVHASANVFREAASLATQIQGTPLGFAVPTEAFEMATPDGTGALNYGVRRPKGVIGVISPWNLPLLLMTWKVGPALACGNTVVVKPSRINGLFKDAIDKGAKVVCGGMAQGAVGVLNYLNRVNAVQPGGTVISLCGPASAGFDIANDSVYGLSSGDDMIKQLTPLGFAAKPEDNVEPYLLGASRKQGKGITTTVISIDGGMALGAG.

Belongs to the aldehyde dehydrogenase family.

It is found in the periplasm. Completely inhibited by HgCl(2), CoCl(2) and CaCl(2). In terms of biological role, catalyzes the NAD(+)-dependent conversion of limonin. This is Limonin dehydrogenase from Pseudomonas putida (Arthrobacter siderocapsulatus).